The following is a 299-amino-acid chain: Cycloserine biosynthesis protein DcsG (299 aa).

ATP contacts are provided by Lys-92, Lys-137, Ser-144, Gln-175, Pro-176, and Val-178. The ATP-grasp domain occupies 95 to 298 (LADLAAHGVP…FAQALAERLK (204 aa)). Catalysis depends on residues Arg-220 and Arg-254. Mg(2+) contacts are provided by Glu-269 and Glu-271. Residue Glu-271 is part of the active site.

As to quaternary structure, monomer. Mg(2+) is required as a cofactor.

It carries out the reaction O-ureido-D-serine + ATP + H2O + H(+) = D-cycloserine + NH4(+) + ADP + phosphate + CO2. Functionally, involved in the biosynthesis of the antibiotic D-cycloserine (DCS), a cyclic structural analog of D-alanine, used as an antitubercular agent. Catalyzes the synthesis of D-cycloserine from O-ureido-D-serine (D-OUS). It reacts with D-OUS, D-homocysteine and beta-aminooxy-D-alanine. This Streptomyces lavendulae protein is Cycloserine biosynthesis protein DcsG.